The primary structure comprises 250 residues: 5'-nucleotidase SurE (250 aa).

The a divalent metal cation site is built by D8, D9, S39, and N95.

The protein belongs to the SurE nucleotidase family. It depends on a divalent metal cation as a cofactor.

It is found in the cytoplasm. The catalysed reaction is a ribonucleoside 5'-phosphate + H2O = a ribonucleoside + phosphate. Functionally, nucleotidase that shows phosphatase activity on nucleoside 5'-monophosphates. This is 5'-nucleotidase SurE from Cupriavidus pinatubonensis (strain JMP 134 / LMG 1197) (Cupriavidus necator (strain JMP 134)).